Consider the following 268-residue polypeptide: MEEHPRAWIISVGNELLIGRTINTNAAWLGSRLTLLGFEVERVVTVPDRVEDIAEEVGRALGRARVVITTGGLGPTYDDVTLQGVAMALGRGLKLHPGALEMVRRFYSKRGLGLTEDRVKMAMLPDGAEPLENPVGAAPGAVVEARGSLVASLPGVPSEMEAMFEKALRPLLEEIAPPGAVVECGIAVVGVPESSLAPYIKEASRVSPRVYVKSHPQGSEIGKPLVRVRVLARASTLEEARAEALKALEKVRRGVEELGGSISEEDSC.

Belongs to the CinA family.

This chain is Protein APE_1980.1, found in Aeropyrum pernix (strain ATCC 700893 / DSM 11879 / JCM 9820 / NBRC 100138 / K1).